A 151-amino-acid polypeptide reads, in one-letter code: Nucleoside diphosphate kinase (151 aa).

Lys-9, Phe-57, Arg-86, Thr-92, Arg-103, and Asn-113 together coordinate ATP. His-116 (pros-phosphohistidine intermediate) is an active-site residue.

It belongs to the NDK family. In terms of assembly, homotetramer. It depends on Mg(2+) as a cofactor.

Its subcellular location is the cytoplasm. It carries out the reaction a 2'-deoxyribonucleoside 5'-diphosphate + ATP = a 2'-deoxyribonucleoside 5'-triphosphate + ADP. It catalyses the reaction a ribonucleoside 5'-diphosphate + ATP = a ribonucleoside 5'-triphosphate + ADP. Functionally, major role in the synthesis of nucleoside triphosphates other than ATP. The ATP gamma phosphate is transferred to the NDP beta phosphate via a ping-pong mechanism, using a phosphorylated active-site intermediate. This chain is Nucleoside diphosphate kinase, found in Chloroflexus aggregans (strain MD-66 / DSM 9485).